The primary structure comprises 55 residues: Protein CADMIUM TOLERANCE 1 (55 aa).

The chain crosses the membrane as a helical span at residues 24–40; it reads GCLYACIFTALCCFCCY.

Belongs to the CYSTM1 family. As to expression, expressed in roots and shoots.

It is found in the cell membrane. It localises to the secreted. Its subcellular location is the cell wall. In terms of biological role, confers resistance to heavy metal ions (e.g. cadmium (CdCl(2)) and copper (CuCl(2))) by chelating them at the plasma membrane of root cells, thus stopping their entry and reducing their accumulation. Binds to aluminium (Al). This chain is Protein CADMIUM TOLERANCE 1, found in Oryza sativa subsp. japonica (Rice).